A 260-amino-acid polypeptide reads, in one-letter code: UPF0246 protein APL_0602 (260 aa).

The protein belongs to the UPF0246 family.

The polypeptide is UPF0246 protein APL_0602 (Actinobacillus pleuropneumoniae serotype 5b (strain L20)).